The primary structure comprises 643 residues: Phosphomethylpyrimidine synthase (643 aa).

Residues Asn-221, Met-250, Tyr-279, His-315, 335–337 (SRG), 376–379 (DGLR), and Glu-415 each bind substrate. His-419 is a binding site for Zn(2+). Tyr-442 serves as a coordination point for substrate. Zn(2+) is bound at residue His-483. [4Fe-4S] cluster-binding residues include Cys-563, Cys-566, and Cys-571.

It belongs to the ThiC family. In terms of assembly, homodimer. [4Fe-4S] cluster serves as cofactor.

It carries out the reaction 5-amino-1-(5-phospho-beta-D-ribosyl)imidazole + S-adenosyl-L-methionine = 4-amino-2-methyl-5-(phosphooxymethyl)pyrimidine + CO + 5'-deoxyadenosine + formate + L-methionine + 3 H(+). It functions in the pathway cofactor biosynthesis; thiamine diphosphate biosynthesis. Catalyzes the synthesis of the hydroxymethylpyrimidine phosphate (HMP-P) moiety of thiamine from aminoimidazole ribotide (AIR) in a radical S-adenosyl-L-methionine (SAM)-dependent reaction. The protein is Phosphomethylpyrimidine synthase of Nitrobacter hamburgensis (strain DSM 10229 / NCIMB 13809 / X14).